Here is a 325-residue protein sequence, read N- to C-terminus: Tartrate-resistant acid phosphatase type 5 (325 aa).

A signal peptide spans methionine 1–glycine 21. 2 N-linked (GlcNAc...) asparagine glycosylation sites follow: asparagine 116 and asparagine 147.

In terms of assembly, exists either as monomer or, after proteolytic processing, as a dimer of two chains linked by disulfide bond(s). Requires Fe cation as cofactor.

The protein localises to the lysosome. The catalysed reaction is a phosphate monoester + H2O = an alcohol + phosphate. The chain is Tartrate-resistant acid phosphatase type 5 (ACP5) from Oryctolagus cuniculus (Rabbit).